The primary structure comprises 392 residues: Galactokinase (392 aa).

37–40 (EHTD) is a substrate binding site. ATP contacts are provided by residues S71 and 128-134 (GSGLSSS). 2 residues coordinate Mg(2+): S134 and E166. The Proton acceptor role is filled by D178. Y228 contributes to the substrate binding site.

It belongs to the GHMP kinase family. GalK subfamily.

Its subcellular location is the cytoplasm. It carries out the reaction alpha-D-galactose + ATP = alpha-D-galactose 1-phosphate + ADP + H(+). It participates in carbohydrate metabolism; galactose metabolism. Its function is as follows. Catalyzes the transfer of the gamma-phosphate of ATP to D-galactose to form alpha-D-galactose-1-phosphate (Gal-1-P). This chain is Galactokinase, found in Streptococcus pneumoniae (strain ATCC BAA-255 / R6).